Reading from the N-terminus, the 127-residue chain is Photosystem II extrinsic protein U (127 aa).

Positions 1 to 31 (MSRLFRRLSTLLLCSLLVLGVWLTQPLSVQA) are cleaved as a signal peptide.

It belongs to the PsbU family. PSII is composed of 1 copy each of membrane proteins PsbA, PsbB, PsbC, PsbD, PsbE, PsbF, PsbH, PsbI, PsbJ, PsbK, PsbL, PsbM, PsbT, PsbX, PsbY, PsbZ, Psb30/Ycf12, peripheral proteins PsbO, CyanoQ (PsbQ), PsbU, PsbV and a large number of cofactors. It forms dimeric complexes.

The protein resides in the cellular thylakoid membrane. One of the extrinsic, lumenal subunits of photosystem II (PSII). PSII is a light-driven water plastoquinone oxidoreductase, using light energy to abstract electrons from H(2)O, generating a proton gradient subsequently used for ATP formation. The extrinsic proteins stabilize the structure of photosystem II oxygen-evolving complex (OEC), the ion environment of oxygen evolution and protect the OEC against heat-induced inactivation. The sequence is that of Photosystem II extrinsic protein U from Synechococcus sp. (strain RCC307).